Here is a 902-residue protein sequence, read N- to C-terminus: Glutamate receptor 4 (902 aa).

A signal peptide spans 1 to 20 (MRIICRQIVLLFSGFWGLAM). The Extracellular segment spans residues 22–544 (AFPSSVQIGG…GVFSFLDPLA (523 aa)). N-linked (GlcNAc...) asparagine glycans are attached at residues asparagine 52, asparagine 56, asparagine 258, asparagine 371, asparagine 407, and asparagine 414. A disulfide bridge connects residues cysteine 84 and cysteine 331. 3 residues coordinate L-glutamate: proline 500, threonine 502, and arginine 507. A helical membrane pass occupies residues 545-565 (YEIWMCIVFAYIGVSVVLFLV). Residues 566-592 (SRFSPYEWHTEEPEDGKEGPSDQPPNE) lie on the Cytoplasmic side of the membrane. The segment at residues 593–608 (FGIFNSLWFSLGAFMQ) is an intramembrane region (helical; Pore-forming). Residues 609–611 (QGC) lie within the membrane without spanning it. Cysteine 611 carries S-palmitoyl cysteine lipidation. The Cytoplasmic segment spans residues 612–617 (DISPRS). Residues 618–638 (LSGRIVGGVWWFFTLIIISSY) form a helical membrane-spanning segment. At 639–813 (TANLAAFLTV…DKTSALSLSN (175 aa)) the chain is on the extracellular side. L-glutamate is bound by residues serine 676, threonine 677, and glutamate 727. The cysteines at positions 740 and 795 are disulfide-linked. Residues 814–834 (VAGVFYILVGGLGLAMLVALI) form a helical membrane-spanning segment. Residues 835-902 (EFCYKSRAEA…GLAVIASDLP (68 aa)) are Cytoplasmic-facing. Cysteine 837 is lipidated: S-palmitoyl cysteine. Position 862 is a phosphoserine (serine 862).

It belongs to the glutamate-gated ion channel (TC 1.A.10.1) family. GRIA4 subfamily. In terms of assembly, homotetramer or heterotetramer of pore-forming glutamate receptor subunits. Tetramers may be formed by the dimerization of dimers. Interacts with EPB41L1 via its C-terminus. Isoform 3 interacts with PICK1. Found in a complex with GRIA1, GRIA2, GRIA3, CNIH2, CNIH3, CACNG2, CACNG3, CACNG4, CACNG5, CACNG7 and CACNG8. Interacts with CACNG5 and PRKCG. Found in a complex with GRIA1, GRIA2, GRIA3, DLG4, CACNG8 and CNIH2. In terms of processing, palmitoylated. Depalmitoylated upon L-glutamate stimulation. ZDHHC3/GODZ specifically palmitoylates Cys-611, which leads to Golgi retention and decreased cell surface expression. In contrast, Cys-837 palmitoylation does not affect cell surface expression but regulates stimulation-dependent endocytosis. Phosphorylated at Ser-862 by PRKCG; phosphorylation increases plasma membrane-associated GRI4 expression.

Its subcellular location is the cell membrane. The protein resides in the postsynaptic cell membrane. It is found in the cell projection. The protein localises to the dendrite. It catalyses the reaction Ca(2+)(in) = Ca(2+)(out). The enzyme catalyses Na(+)(in) = Na(+)(out). It carries out the reaction Mg(2+)(in) = Mg(2+)(out). In terms of biological role, ionotropic glutamate receptor that functions as a ligand-gated cation channel, gated by L-glutamate and glutamatergic agonists such as alpha-amino-3-hydroxy-5-methyl-4-isoxazolepropionic acid (AMPA), quisqualic acid, and kainic acid. L-glutamate acts as an excitatory neurotransmitter at many synapses in the central nervous system and plays an important role in fast excitatory synaptic transmission. Binding of the excitatory neurotransmitter L-glutamate induces a conformation change, leading to the opening of the cation channel, and thereby converts the chemical signal to an electrical impulse upon entry of monovalent and divalent cations such as sodium and calcium. The receptor then desensitizes rapidly and enters a transient inactive state, characterized by the presence of bound agonist. In the presence of CACNG8, shows resensitization which is characterized by a delayed accumulation of current flux upon continued application of L-glutamate. The protein is Glutamate receptor 4 of Mus musculus (Mouse).